The chain runs to 303 residues: MWFKNLTVYRFNKPFSVDTEALEKSLEDFTFSPCSSQDISKFGFSNALGKQGQTLVHSASERHLICATKEEKILPSQVIKEALEDKVAQIEAEEDRKLAKKEKDAMKEEIVMTLLPRAFTRRSQIRALIIPEIEMILVDSSSAAKSEELLALLRKALGSLPIIPLSFKTPIETQLTEWLKGNSTPAPFIMQDEAELKTDSDEGGIVRFKQQDLTEDEVLAHIEVGKQVHKLALYFGQSIAFLLQSDAGIKRLKFSEEFRAGNDEVGTEDPMARLDADFALMGSELIALMNSLVEVLGGVEDSI.

This sequence belongs to the RdgC family.

The protein localises to the cytoplasm. It localises to the nucleoid. May be involved in recombination. In Shewanella sediminis (strain HAW-EB3), this protein is Recombination-associated protein RdgC.